The chain runs to 146 residues: 3-hydroxyacyl-[acyl-carrier-protein] dehydratase FabZ (146 aa).

H49 is a catalytic residue.

Belongs to the thioester dehydratase family. FabZ subfamily.

It localises to the cytoplasm. It catalyses the reaction a (3R)-hydroxyacyl-[ACP] = a (2E)-enoyl-[ACP] + H2O. Its function is as follows. Involved in unsaturated fatty acids biosynthesis. Catalyzes the dehydration of short chain beta-hydroxyacyl-ACPs and long chain saturated and unsaturated beta-hydroxyacyl-ACPs. The protein is 3-hydroxyacyl-[acyl-carrier-protein] dehydratase FabZ of Ectopseudomonas mendocina (strain ymp) (Pseudomonas mendocina).